We begin with the raw amino-acid sequence, 213 residues long: Virulence factor 1 (213 aa).

Its subcellular location is the host mitochondrion. Its function is as follows. Plays a role in antagonizing the host innate immune response. In Norovirus (isolate Mouse/NoV/United States/MNV1/2002/GV) (MNV-1), this protein is Virulence factor 1.